Consider the following 377-residue polypeptide: Probable protein phosphatase 2C 7 (377 aa).

Disordered stretches follow at residues 1–68 (MAAH…GKAA) and 80–99 (TTVA…EDDE). Over residues 21-39 (PPAAEAEAAAAAAAIARAA) the composition is skewed to low complexity. Residues 51–63 (GVRHPLKHRRFRA) are compositionally biased toward basic residues. Low complexity predominate over residues 80–89 (TTVAEATATG). The PPM-type phosphatase domain maps to 115 to 361 (SCGYSSFRGR…DNITCIVVKF (247 aa)). Mn(2+)-binding residues include aspartate 151, glycine 152, aspartate 313, and aspartate 352.

The protein belongs to the PP2C family. The cofactor is Mg(2+). Mn(2+) serves as cofactor.

The catalysed reaction is O-phospho-L-seryl-[protein] + H2O = L-seryl-[protein] + phosphate. It catalyses the reaction O-phospho-L-threonyl-[protein] + H2O = L-threonyl-[protein] + phosphate. The protein is Probable protein phosphatase 2C 7 of Oryza sativa subsp. japonica (Rice).